A 106-amino-acid chain; its full sequence is Immunity protein CdiI (106 aa).

As to quaternary structure, forms a contact-dependent growth inhibition complex of CdiA-CT-NC101, CdiI-NC101 and EF-Tu; the complex is a dimer of heterotrimers.

In terms of biological role, immunity protein component of a toxin-immunity protein module, which functions as a cellular contact-dependent growth inhibition (CDI) system. CDI modules allow bacteria to communicate with and inhibit the growth of closely related neighboring bacteria in a contact-dependent fashion. Neutralizes the toxic activity of cognate toxin CdiA-NC101 (the C-terminal 154 residue CT fragment). Does not inhibit toxic activity of CdiA from other toxin-immunity modules or strains of E.coli. Mediates dimerization of the ternary CdiA-CT-NC101, CdiI-NC101 and EF-Tu complex; both CdiI molecules contact both EF-Tu molecules. This chain is Immunity protein CdiI, found in Escherichia coli (strain NC101).